The sequence spans 394 residues: Seipin (394 aa).

Over 1 to 27 the chain is Cytoplasmic; it reads MVNDPPVPALLWAQEMGHVMAGRARKL. The chain crosses the membrane as a helical span at residues 28 to 48; that stretch reads LLQFGVFFCTILLLLWVSVFL. Topologically, residues 49-242 are lumenal; sequence YGSFYYSYMP…TCAFVGVASN (194 aa). Residues Asn-88 and Asn-242 are each glycosylated (N-linked (GlcNAc...) asparagine). The helical transmembrane segment at 243–263 threads the bilayer; that stretch reads FTFLSVIVLFSYMQWVWGGIW. Residues 264–394 lie on the Cytoplasmic side of the membrane; it reads PRQRLSLQVN…VRQRPICSSS (131 aa). The interval 281–394 is disordered; it reads RKDIQRKVSA…VRQRPICSSS (114 aa). At Ser-289 the chain carries Phosphoserine. Positions 292-303 are enriched in low complexity; sequence QPGPQGQEESPQ. 2 positions are modified to phosphoserine: Ser-346 and Ser-351.

The protein belongs to the seipin family. As to quaternary structure, undecamer (an oligomer having eleven subunits). Oligomerization is important for its function in lipid droplet formation. Interacts with LDAF1 to form an oligomeric complex. Interacts with RAB18. Interacts with ZFYVE1 in a RAB18-dependent manner.

It localises to the endoplasmic reticulum membrane. It is found in the lipid droplet. Functionally, plays a crucial role in the formation of lipid droplets (LDs) which are storage organelles at the center of lipid and energy homeostasis. In association with LDAF1, defines the sites of LD formation in the ER. Also required for growth and maturation of small nascent LDs into larger mature LDs. Mediates the formation and/or stabilization of endoplasmic reticulum-lipid droplets (ER-LD) contacts, facilitating protein and lipid delivery from the ER into growing LDs. Regulates the maturation of ZFYVE1-positive nascent LDs and the function of the RAB18-ZFYVE1 complex in mediating the formation of ER-LD contacts. Binds anionic phospholipids including phosphatidic acid. Plays an important role in the differentiation and development of adipocytes. This chain is Seipin, found in Bos taurus (Bovine).